Here is a 354-residue protein sequence, read N- to C-terminus: Rhodopsin (354 aa).

Topologically, residues 1 to 36 are extracellular; the sequence is MNGTEGPNFYIPMSNKTGVVRSPFEYPQYYLAEPWK. Residues Asn-2 and Asn-15 are each glycosylated (N-linked (GlcNAc...) asparagine). A helical transmembrane segment spans residues 37-61; it reads YSILAAYMFLLILLGFPINFMTLYV. The Cytoplasmic portion of the chain corresponds to 62 to 73; that stretch reads TIQHKKLRTPLN. A helical transmembrane segment spans residues 74-96; the sequence is YILLNLAFANHFMVLCGFTITLY. Residues 97 to 110 are Extracellular-facing; the sequence is TSLHGYFVFGQSGC. Cys-110 and Cys-187 are disulfide-bonded. A helical transmembrane segment spans residues 111 to 133; sequence YFEGFFATLGGEIALWSLVALAI. Residues 134 to 136 carry the 'Ionic lock' involved in activated form stabilization motif; it reads ERY. Over 134–152 the chain is Cytoplasmic; it reads ERYIVVCKPMSNFRFGENH. The chain crosses the membrane as a helical span at residues 153–173; it reads AMMGVAFTWIMALACAVPPLF. Over 174-202 the chain is Extracellular; it reads GWSRYIPEGMQCSCGVDYYTLKPEINNES. Residues 203–224 form a helical membrane-spanning segment; that stretch reads FVIYMFVVHFLIPLIIITFCYG. At 225-252 the chain is on the cytoplasmic side; sequence RLVCTVKEAAAQQQESATTQKAEKEVTR. The chain crosses the membrane as a helical span at residues 253–274; the sequence is MVIIMVIFFLICWVPYAYVAFY. The Extracellular portion of the chain corresponds to 275 to 286; the sequence is IFCNQGSEFGPI. The helical transmembrane segment at 287–308 threads the bilayer; it reads FMTVPAFFAKSSAIYNPVIYIM. N6-(retinylidene)lysine is present on Lys-296. At 309-354 the chain is on the cytoplasmic side; that stretch reads LNKQFRNCMITTLCCGKNPFGDDDASSAATSKTEATSVSTSQVSPA. 2 S-palmitoyl cysteine lipidation sites follow: Cys-322 and Cys-323. The disordered stretch occupies residues 332-354; the sequence is DASSAATSKTEATSVSTSQVSPA. Residues 334–354 show a composition bias toward low complexity; it reads SSAATSKTEATSVSTSQVSPA.

The protein belongs to the G-protein coupled receptor 1 family. Opsin subfamily. Contains one covalently linked retinal chromophore. Upon light absorption, the covalently bound 11-cis-retinal is converted to all-trans-retinal. After hydrolysis of the Schiff base and release of the covalently bound all-trans-retinal, active rhodopsin is regenerated by binding of a fresh molecule of 11-cis-retinal.

The protein localises to the membrane. It is found in the cell projection. Its subcellular location is the cilium. The protein resides in the photoreceptor outer segment. Functionally, photoreceptor required for image-forming vision at low light intensity. Required for photoreceptor cell viability after birth. Light-induced isomerization of 11-cis to all-trans retinal triggers a conformational change that activates signaling via G-proteins. Subsequent receptor phosphorylation mediates displacement of the bound G-protein alpha subunit by arrestin and terminates signaling. The polypeptide is Rhodopsin (RHO) (Rana temporaria (European common frog)).